A 56-amino-acid polypeptide reads, in one-letter code: Small ribosomal subunit protein uS14 (56 aa).

Zn(2+) contacts are provided by cysteine 21, cysteine 24, cysteine 39, and cysteine 42.

It belongs to the universal ribosomal protein uS14 family. As to quaternary structure, component of the 40S small ribosomal subunit. It depends on Zn(2+) as a cofactor.

It is found in the cytoplasm. It localises to the cytosol. The protein resides in the rough endoplasmic reticulum. This chain is Small ribosomal subunit protein uS14 (RpS29), found in Bombyx mori (Silk moth).